A 295-amino-acid chain; its full sequence is Sulfotransferase 1A1 (295 aa).

48–53 is a binding site for 3'-phosphoadenylyl sulfate; that stretch reads KSGTTW. 106 to 108 lines the substrate pocket; that stretch reads KTH. The active-site Proton acceptor is His108. 3'-phosphoadenylyl sulfate-binding positions include Arg130, Ser138, Tyr193, 227–232, and 255–259; these read TSFKEM and FMRKG. Ser138 carries the post-translational modification Phosphoserine.

This sequence belongs to the sulfotransferase 1 family. Homodimer. In terms of tissue distribution, ubiquitously expressed in canine tissues with highest expression in male and female liver.

The protein localises to the cytoplasm. It carries out the reaction a phenol + 3'-phosphoadenylyl sulfate = an aryl sulfate + adenosine 3',5'-bisphosphate + H(+). It catalyses the reaction 17beta-estradiol + 3'-phosphoadenylyl sulfate = 17beta-estradiol 3-sulfate + adenosine 3',5'-bisphosphate + H(+). The enzyme catalyses 4-ethylphenol + 3'-phosphoadenylyl sulfate = 4-ethylphenyl sulfate + adenosine 3',5'-bisphosphate + H(+). The catalysed reaction is 4-nitrophenol + 3'-phosphoadenylyl sulfate = 4-nitrophenyl sulfate + adenosine 3',5'-bisphosphate. It carries out the reaction dopamine + 3'-phosphoadenylyl sulfate = dopamine 3-O-sulfate + adenosine 3',5'-bisphosphate + H(+). It catalyses the reaction dopamine + 3'-phosphoadenylyl sulfate = dopamine 4-O-sulfate + adenosine 3',5'-bisphosphate + H(+). The enzyme catalyses 3,3',5-triiodo-L-thyronine + 3'-phosphoadenylyl sulfate = 3,3',5-triiodo-L-thyronine sulfate + adenosine 3',5'-bisphosphate + H(+). The catalysed reaction is 3,3',5'-triiodo-L-thyronine + 3'-phosphoadenylyl sulfate = 3,3',5'-triiodo-L-thyronine sulfate + adenosine 3',5'-bisphosphate + H(+). It carries out the reaction 3,3'-diiodo-L-thyronine + 3'-phosphoadenylyl sulfate = 3,3'-diiodo-L-thyronine sulfate + adenosine 3',5'-bisphosphate + H(+). It catalyses the reaction L-thyroxine + 3'-phosphoadenylyl sulfate = L-thyroxine sulfate + adenosine 3',5'-bisphosphate + H(+). Sulfotransferase that utilizes 3'-phospho-5'-adenylyl sulfate (PAPS) as sulfonate donor to catalyze the sulfate conjugation of a wide variety of acceptor molecules bearing a hydroxyl or an amine group. Sulfonation increases the water solubility of most compounds, and therefore their renal excretion, but it can also result in bioactivation to form active metabolites. Displays broad substrate specificity for small phenolic compounds. Plays an important role in the sulfonation of endogenous molecules such as steroid hormones. Mediates also the metabolic activation of carcinogenic N-hydroxyarylamines leading to highly reactive intermediates capable of forming DNA adducts, potentially resulting in mutagenesis. May play a role in gut microbiota-host metabolic interaction. O-sulfonates 4-ethylphenol (4-EP), a dietary tyrosine-derived metabolite produced by gut bacteria. The product 4-EPS crosses the blood-brain barrier and may negatively regulate oligodendrocyte maturation and myelination, affecting the functional connectivity of different brain regions associated with the limbic system. Catalyzes the sulfate conjugation of dopamine. Catalyzes the sulfation of T4 (L-thyroxine/3,5,3',5'-tetraiodothyronine), T3 (3,5,3'-triiodothyronine), rT3 (3,3',5'-triiodothyronine) and 3,3'-T2 (3,3'-diiodothyronine), with a substrate preference of 3,3'-T2 &gt; rT3 &gt; T3 &gt; T4. The sequence is that of Sulfotransferase 1A1 (SULT1A1) from Canis lupus familiaris (Dog).